We begin with the raw amino-acid sequence, 119 residues long: Large ribosomal subunit protein bL20 (119 aa).

It belongs to the bacterial ribosomal protein bL20 family.

Its function is as follows. Binds directly to 23S ribosomal RNA and is necessary for the in vitro assembly process of the 50S ribosomal subunit. It is not involved in the protein synthesizing functions of that subunit. The chain is Large ribosomal subunit protein bL20 from Thiobacillus denitrificans (strain ATCC 25259 / T1).